The following is a 581-amino-acid chain: Adenine deaminase (581 aa).

This sequence belongs to the metallo-dependent hydrolases superfamily. Adenine deaminase family. It depends on Mn(2+) as a cofactor.

The enzyme catalyses adenine + H2O + H(+) = hypoxanthine + NH4(+). In Brucella abortus (strain 2308), this protein is Adenine deaminase.